Reading from the N-terminus, the 609-residue chain is Dihydroxy-acid dehydratase (609 aa).

Position 81 (Asp81) interacts with Mg(2+). Cys122 serves as a coordination point for [2Fe-2S] cluster. Mg(2+) is bound by residues Asp123 and Lys124. Lys124 is subject to N6-carboxylysine. Cys195 lines the [2Fe-2S] cluster pocket. Position 491 (Glu491) interacts with Mg(2+). Ser517 serves as the catalytic Proton acceptor.

It belongs to the IlvD/Edd family. As to quaternary structure, homodimer. It depends on [2Fe-2S] cluster as a cofactor. Requires Mg(2+) as cofactor.

The catalysed reaction is (2R)-2,3-dihydroxy-3-methylbutanoate = 3-methyl-2-oxobutanoate + H2O. It carries out the reaction (2R,3R)-2,3-dihydroxy-3-methylpentanoate = (S)-3-methyl-2-oxopentanoate + H2O. The protein operates within amino-acid biosynthesis; L-isoleucine biosynthesis; L-isoleucine from 2-oxobutanoate: step 3/4. It functions in the pathway amino-acid biosynthesis; L-valine biosynthesis; L-valine from pyruvate: step 3/4. Its function is as follows. Functions in the biosynthesis of branched-chain amino acids. Catalyzes the dehydration of (2R,3R)-2,3-dihydroxy-3-methylpentanoate (2,3-dihydroxy-3-methylvalerate) into 2-oxo-3-methylpentanoate (2-oxo-3-methylvalerate) and of (2R)-2,3-dihydroxy-3-methylbutanoate (2,3-dihydroxyisovalerate) into 2-oxo-3-methylbutanoate (2-oxoisovalerate), the penultimate precursor to L-isoleucine and L-valine, respectively. This is Dihydroxy-acid dehydratase from Acinetobacter baumannii (strain AB0057).